Here is a 412-residue protein sequence, read N- to C-terminus: Isocitrate dehydrogenase [NADP] (412 aa).

Thr-100 contacts NADP(+). Residues Ser-109, Asn-111, Arg-115, Arg-125, and Arg-149 each contribute to the D-threo-isocitrate site. Asp-301 provides a ligand contact to Mg(2+). Residues 333–339, Asn-346, Tyr-385, and Arg-389 contribute to the NADP(+) site; that span reads HGSAPKY.

The protein belongs to the isocitrate and isopropylmalate dehydrogenases family. Homodimer. Requires Mg(2+) as cofactor. Mn(2+) serves as cofactor.

It catalyses the reaction D-threo-isocitrate + NADP(+) = 2-oxoglutarate + CO2 + NADPH. Its function is as follows. Catalyzes the oxidative decarboxylation of isocitrate to 2-oxoglutarate and carbon dioxide with the concomitant reduction of NADP(+). NAD(+) can replace NADP(+) with low efficiency. In Archaeoglobus fulgidus (strain ATCC 49558 / DSM 4304 / JCM 9628 / NBRC 100126 / VC-16), this protein is Isocitrate dehydrogenase [NADP].